We begin with the raw amino-acid sequence, 461 residues long: Bifunctional protein GlmU (461 aa).

The pyrophosphorylase stretch occupies residues 1-232 (MNLQIIILAA…SFEVQGINNR (232 aa)). UDP-N-acetyl-alpha-D-glucosamine is bound by residues 8–11 (LAAG), Lys22, Gln73, and 78–79 (GT). Asp102 is a binding site for Mg(2+). Residues Gly142, Glu157, and Asn230 each contribute to the UDP-N-acetyl-alpha-D-glucosamine site. Mg(2+) is bound at residue Asn230. The tract at residues 233–253 (QQLQQLERIWQQRAANQLMEK) is linker. The segment at 254 to 461 (GVTLADANRF…WKRPAKRERD (208 aa)) is N-acetyltransferase. Arg336 and Lys354 together coordinate UDP-N-acetyl-alpha-D-glucosamine. His366 functions as the Proton acceptor in the catalytic mechanism. Tyr369 and Asn380 together coordinate UDP-N-acetyl-alpha-D-glucosamine. Acetyl-CoA is bound by residues Ala383, 389-390 (NY), Ser408, and Ala426.

It in the N-terminal section; belongs to the N-acetylglucosamine-1-phosphate uridyltransferase family. This sequence in the C-terminal section; belongs to the transferase hexapeptide repeat family. In terms of assembly, homotrimer. Mg(2+) serves as cofactor.

The protein localises to the cytoplasm. The catalysed reaction is alpha-D-glucosamine 1-phosphate + acetyl-CoA = N-acetyl-alpha-D-glucosamine 1-phosphate + CoA + H(+). The enzyme catalyses N-acetyl-alpha-D-glucosamine 1-phosphate + UTP + H(+) = UDP-N-acetyl-alpha-D-glucosamine + diphosphate. The protein operates within nucleotide-sugar biosynthesis; UDP-N-acetyl-alpha-D-glucosamine biosynthesis; N-acetyl-alpha-D-glucosamine 1-phosphate from alpha-D-glucosamine 6-phosphate (route II): step 2/2. It functions in the pathway nucleotide-sugar biosynthesis; UDP-N-acetyl-alpha-D-glucosamine biosynthesis; UDP-N-acetyl-alpha-D-glucosamine from N-acetyl-alpha-D-glucosamine 1-phosphate: step 1/1. It participates in bacterial outer membrane biogenesis; LPS lipid A biosynthesis. Catalyzes the last two sequential reactions in the de novo biosynthetic pathway for UDP-N-acetylglucosamine (UDP-GlcNAc). The C-terminal domain catalyzes the transfer of acetyl group from acetyl coenzyme A to glucosamine-1-phosphate (GlcN-1-P) to produce N-acetylglucosamine-1-phosphate (GlcNAc-1-P), which is converted into UDP-GlcNAc by the transfer of uridine 5-monophosphate (from uridine 5-triphosphate), a reaction catalyzed by the N-terminal domain. This Legionella pneumophila (strain Lens) protein is Bifunctional protein GlmU.